The following is a 514-amino-acid chain: DNA damage-binding protein CMR1 (514 aa).

The segment at 26 to 116 (NLDSLSQSIK…VKQEEKEELS (91 aa)) is disordered. Residues 34–44 (IKRELPRASET) are compositionally biased toward basic and acidic residues. A compositionally biased stretch (basic residues) spans 45 to 55 (KKRKTTPRTKA). Basic and acidic residues-rich tracts occupy residues 56-65 (VKKEDVEPSR) and 92-116 (KFED…EELS). WD repeat units follow at residues 180–221 (ISHT…DDSE), 229–269 (PHGK…STEV), 280–320 (DYAL…KPLK), 327–367 (LHDK…KANA), 385–423 (SSRL…LIPD), 438–481 (GRWV…IAHL), and 483–514 (DSVG…YLFE).

Belongs to the WD repeat DDB2/WDR76 family.

In terms of biological role, DNA-binding protein that binds to both single- and double-stranded DNA. Binds preferentially to UV-damaged DNA. May be involved in DNA-metabolic processes. The sequence is that of DNA damage-binding protein CMR1 (PRW1) from Scheffersomyces stipitis (strain ATCC 58785 / CBS 6054 / NBRC 10063 / NRRL Y-11545) (Yeast).